The primary structure comprises 413 residues: MRDDRALNVTSEIGRLKTVLLHRPGEEIENLTPDLLDRLLFDDIPYLKVAREEHDAFAQTLREAGVEVLYLEVLAAEAIETSDEVKQQFISEFIDEAGVESERLKEALIEYFNSFSDNKSMVDKMMAGVRKEELKDYHRESLYDQVNNVYPFVCDPMPNLYFTRDPFATIGHGITLNHMRTDTRNRETIFAKYIFRHHPRFEGKDVPFWFNRDEKTSLEGGDELILSKEVLAVGISQRTDSASVEKLARKLLYYPDTSFKTVLAFKIPVSRAFMHLDTVFTQVDYDKFTVHPGIVGPLEVYAITKDPEKDVQLIAVEECDTLENILKKYLKRDIELIKCGGGDEIIAAREQWNDGSNTLAIAPGEVVVYSRNYVTNEILEKKGIKLHVIPSSELSRGRGGPRCMSMPLIREDL.

The active-site Amidino-cysteine intermediate is C403.

Belongs to the arginine deiminase family.

It localises to the cytoplasm. The enzyme catalyses L-arginine + H2O = L-citrulline + NH4(+). It functions in the pathway amino-acid degradation; L-arginine degradation via ADI pathway; carbamoyl phosphate from L-arginine: step 1/2. This chain is Arginine deiminase, found in Clostridium perfringens (strain SM101 / Type A).